The chain runs to 264 residues: Major prion protein (264 aa).

Residues 1 to 24 form the signal peptide; sequence MVKSHIGSWILVLFVAMWSDVGLC. Residues 25–241 form an interaction with GRB2, ERI3 and SYN1 region; the sequence is KKRPKPGGGW…ESQAYYQRGA (217 aa). The disordered stretch occupies residues 28 to 118; the sequence is PKPGGGWNTG…QWNKPSKPKT (91 aa). A run of 6 repeats spans residues 54–62, 63–70, 71–78, 79–86, 87–94, and 95–103. Residues 54–103 form a 6 X 8 AA tandem repeats of P-H-G-G-G-W-G-Q region; that stretch reads PQGGGSWGQPHGGGWGQPHGGSWGQPHGGGWGQPHGGGWGQPHGGGGWGQ. Over residues 55–107 the composition is skewed to gly residues; that stretch reads QGGGSWGQPHGGGWGQPHGGSWGQPHGGGWGQPHGGGWGQPHGGGGWGQGGTH. Cu(2+) contacts are provided by histidine 72, glycine 73, glycine 74, histidine 80, glycine 81, glycine 82, histidine 88, glycine 89, glycine 90, histidine 96, glycine 98, and glycine 99. A disulfide bridge links cysteine 190 with cysteine 225. Asparagine 192 and asparagine 208 each carry an N-linked (GlcNAc...) asparagine glycan. Alanine 241 carries the GPI-anchor amidated alanine lipid modification. Positions 242-264 are cleaved as a propeptide — removed in mature form; it reads SVVLFSSPPVVLLISFLIFLIVG.

The protein belongs to the prion family. As to quaternary structure, monomer and homodimer. Has a tendency to aggregate into amyloid fibrils containing a cross-beta spine, formed by a steric zipper of superposed beta-strands. Soluble oligomers may represent an intermediate stage on the path to fibril formation. Copper binding may promote oligomerization. Interacts with GRB2, APP, ERI3/PRNPIP and SYN1. Mislocalized cytosolically exposed PrP interacts with MGRN1; this interaction alters MGRN1 subcellular location and causes lysosomal enlargement. Interacts with KIAA1191.

It is found in the cell membrane. The protein localises to the golgi apparatus. Functionally, its primary physiological function is unclear. Has cytoprotective activity against internal or environmental stresses. May play a role in neuronal development and synaptic plasticity. May be required for neuronal myelin sheath maintenance. May play a role in iron uptake and iron homeostasis. Soluble oligomers are toxic to cultured neuroblastoma cells and induce apoptosis (in vitro). Association with GPC1 (via its heparan sulfate chains) targets PRNP to lipid rafts. Also provides Cu(2+) or Zn(2+) for the ascorbate-mediated GPC1 deaminase degradation of its heparan sulfate side chains. This Boselaphus tragocamelus (Nilgai) protein is Major prion protein (PRNP).